Here is a 294-residue protein sequence, read N- to C-terminus: 4-hydroxy-tetrahydrodipicolinate synthase (294 aa).

Thr-44 provides a ligand contact to pyruvate. Tyr-132 serves as the catalytic Proton donor/acceptor. The active-site Schiff-base intermediate with substrate is Lys-160. Val-202 contributes to the pyruvate binding site.

This sequence belongs to the DapA family. Homotetramer; dimer of dimers.

The protein localises to the cytoplasm. The catalysed reaction is L-aspartate 4-semialdehyde + pyruvate = (2S,4S)-4-hydroxy-2,3,4,5-tetrahydrodipicolinate + H2O + H(+). Its pathway is amino-acid biosynthesis; L-lysine biosynthesis via DAP pathway; (S)-tetrahydrodipicolinate from L-aspartate: step 3/4. Catalyzes the condensation of (S)-aspartate-beta-semialdehyde [(S)-ASA] and pyruvate to 4-hydroxy-tetrahydrodipicolinate (HTPA). The protein is 4-hydroxy-tetrahydrodipicolinate synthase of Leptospira borgpetersenii serovar Hardjo-bovis (strain L550).